The primary structure comprises 519 residues: T-complex protein 11-like protein 2 (519 aa).

The interval 1 to 30 is disordered; sequence MPFNGEKQCVGEDQPSDSDSSRFSESMASL. S16 is subject to Phosphoserine. Residues 17 to 29 are compositionally biased toward low complexity; that stretch reads DSDSSRFSESMAS.

Belongs to the TCP11 family. Interacts with FMNL2; this interaction promotes muscle-derived satellite cell (MDSC) migration and differentiation.

It localises to the cytoplasm. The protein resides in the cytoskeleton. Promotes the migration of muscle-derived satellite cells (MDSCs) during differentiation throught interaction with FMNL2 and therefore may participate in microfilament assembly. The sequence is that of T-complex protein 11-like protein 2 from Homo sapiens (Human).